The chain runs to 45 residues: Temporin-SHf (45 aa).

Residues 1–10 form the signal peptide; it reads FLGTINLSLC. Positions 11–35 are excised as a propeptide; the sequence is EEERDADEEERRDEPDESNVEVKKR. At Phe43 the chain carries Phenylalanine amide.

Belongs to the frog skin active peptide (FSAP) family. Temporin subfamily.

The protein resides in the secreted. It localises to the target cell membrane. Its function is as follows. Non-amphipathic alpha-helical antimicrobial peptide with potent activity against some Gram-positive bacteria (including methicillin-resistant Staphylococcus aureus (MRSA)), weak activity against Gram-negative bacteria and no activity against fungi. Permeabilizates membranes through a detergent-like effect probably via the carpet mechanism. More precisely, it strongly and selectively perturbs anionic bilayers membranes by interacting with the polar headgroups and the glycerol backbone region of the phospholipids, hence disrupting the acyl chain packing of the bilayer. Is not active against Leishmania (promastigote and axenic amastigote forms). Does not show hemolytic activity. Does not show toxicity for human THP-1-derived macrophages. In Pelophylax saharicus (Sahara frog), this protein is Temporin-SHf.